The primary structure comprises 693 residues: ATP-dependent DNA helicase RecG (693 aa).

The segment at 48 to 146 is wedge domain; sequence THLYPIGELL…GDLSTPELQE (99 aa). The Helicase ATP-binding domain maps to 283-448; it reads DMALDVPMMR…AYADLDTSVI (166 aa). 296 to 303 contributes to the ATP binding site; that stretch reads GDVGSGKT. The DEAH box motif lies at 397–400; it reads DEQH. Residues 482-628 form the Helicase C-terminal domain; it reads EGRQAYWVCT…GFVIAQKDLE (147 aa).

It belongs to the helicase family. RecG subfamily. As to quaternary structure, monomer in solution. Probably a monomer on HJ DNA. Binding to fork DNA is facilitated by SSB; the proteins do not seem to stably associate. Mg(2+) serves as cofactor.

The enzyme catalyses Couples ATP hydrolysis with the unwinding of duplex DNA by translocating in the 3'-5' direction.. It carries out the reaction ATP + H2O = ADP + phosphate + H(+). Functionally, plays a critical role in recombination and DNA repair. Helps process Holliday junction (HJ) intermediates to mature products by catalyzing branch migration. Has replication fork regression activity, unwinds stalled or blocked replication forks to make a HJ that can be resolved by RuvC or RusA. Also rewinds unwound dsDNA in an ATP-dependent manner. Has double-stranded (ds)DNA unwinding activity characteristic of a DNA helicase with 3'-5' polarity in vitro on linear dsDNA; branched duplex DNA (Y-DNA) substrates adopt different conformations that influence which of the two arms are unwound. Binds and unwinds HJ and Y-DNA but not linear duplex DNA; binds no more than 10 nucleotides of ssDNA at a fork. Has a role in constitutive stable DNA replication (cSDR, DNA replication in the absence of protein synthesis) and R-loop (RNA annealed with dsDNA) formation. Unwinds R-loops but not RNA:DNA hybrids. Is genetically synergistic to RadA and RuvABC. The chain is ATP-dependent DNA helicase RecG from Escherichia coli (strain K12).